A 50-amino-acid chain; its full sequence is uncharacterized protein (50 aa).

It is found in the mitochondrion. This is an uncharacterized protein from Saccharomyces cerevisiae (strain ATCC 204508 / S288c) (Baker's yeast).